The primary structure comprises 276 residues: Protein TabB (276 aa).

Belongs to the transferase hexapeptide repeat family. Pyridoxal 5'-phosphate is required as a cofactor.

This Pseudomonas amygdali pv. tabaci (Pseudomonas syringae pv. tabaci) protein is Protein TabB (tabB).